Consider the following 102-residue polypeptide: Parathymosin (102 aa).

The segment at 1–102 (MSEKSVEAAA…RQKTENGASA (102 aa)) is disordered. Serine 2 carries the post-translational modification N-acetylserine. Position 2 is a phosphoserine (serine 2). An N6-acetyllysine modification is found at lysine 4. Residues serine 5 and serine 13 each carry the phosphoserine modification. A compositionally biased stretch (basic and acidic residues) spans 13 to 37 (SAKDLKEKKEKVEEKASRKERKKEV). Position 15 is an N6-acetyllysine (lysine 15). Residues 38–76 (VEEEENGAEEEEEETAEDGEEEDEGEEEDEEEEEEDDEG) are compositionally biased toward acidic residues. Threonine 52 is subject to Phosphothreonine. An N6-acetyllysine modification is found at lysine 92.

The protein belongs to the pro/parathymosin family.

Its function is as follows. Parathymosin may mediate immune function by blocking the effect of prothymosin alpha which confers resistance to certain opportunistic infections. The polypeptide is Parathymosin (PTMS) (Homo sapiens (Human)).